The following is a 283-amino-acid chain: uncharacterized protein (283 aa).

The span at 1–10 (MELNKTSESL) shows a compositional bias: polar residues. Disordered stretches follow at residues 1–99 (MELN…NPTS) and 255–283 (DQEG…EAHI). 3 stretches are compositionally biased toward basic and acidic residues: residues 14–34 (KIDH…REVR), 42–53 (SSTRQEKADRMP), and 61–71 (ESSKGSEEGAV).

This sequence belongs to the chlamydial CPn_0705/CT_671/TC_0042 family.

This is an uncharacterized protein from Chlamydia trachomatis serovar D (strain ATCC VR-885 / DSM 19411 / UW-3/Cx).